Here is a 265-residue protein sequence, read N- to C-terminus: Photosystem II 22 kDa protein, chloroplastic (265 aa).

The transit peptide at 1-59 directs the protein to the chloroplast; sequence MAQTMLLTSGVTAGHFLRNKSPLAQPKVHHLFLSGNSPVALPSRRQSFVPLALFKPKTK. 2 consecutive repeat copies span residues 54-158 and 159-264. 4 helical membrane passes run 96–116, 130–150, 195–215, and 229–249; these read VAMIGFAASLLGEALTGKGIL, AEPLLLFFILFTLLGAIGALG, LFVGRLAQLGIAFSLIGEIIT, and IPIQDIEPLVLLNVAFFFFAA.

It belongs to the ELIP/psbS family.

The protein localises to the plastid. The protein resides in the chloroplast thylakoid membrane. Its function is as follows. Plays an important role in non-photochemical quenching (NPQ), a process maintains the balance between dissipation and utilization of light energy to minimize generation of oxidizing molecules, thereby protecting the plant against photo-oxidative damage; acts upstream of DLDG1. Is not necessary for efficient light harvesting and photosynthesis. In Arabidopsis thaliana (Mouse-ear cress), this protein is Photosystem II 22 kDa protein, chloroplastic.